The primary structure comprises 479 residues: Cardiolipin synthase (479 aa).

Transmembrane regions (helical) follow at residues 5 to 25 and 34 to 54; these read SLLL…IIFL and WAWV…YLIF. PLD phosphodiesterase domains follow at residues 216–243 and 392–419; these read INYR…GDEY and QNGF…DVRS. Active-site residues include His-221, Lys-223, Asp-228, His-397, Lys-399, and Asp-404.

This sequence belongs to the phospholipase D family. Cardiolipin synthase subfamily.

It localises to the cell membrane. The enzyme catalyses 2 a 1,2-diacyl-sn-glycero-3-phospho-(1'-sn-glycerol) = a cardiolipin + glycerol. Catalyzes the reversible phosphatidyl group transfer from one phosphatidylglycerol molecule to another to form cardiolipin (CL) (diphosphatidylglycerol) and glycerol. The polypeptide is Cardiolipin synthase (cls) (Oceanobacillus iheyensis (strain DSM 14371 / CIP 107618 / JCM 11309 / KCTC 3954 / HTE831)).